The sequence spans 407 residues: Snake venom metalloproteinase ACLH (407 aa).

Positions 1-20 (MIQVLLVTLCLAAFPYQGSS) are cleaved as a signal peptide. Positions 21 to 187 (IILESGNVND…PIKKASQLNL (167 aa)) are excised as a propeptide. One can recognise a Peptidase M12B domain in the interval 193-389 (RYVELVTVVD…ENPQCILNKP (197 aa)). Glutamate 196 and aspartate 280 together coordinate Ca(2+). Intrachain disulfides connect cysteine 304–cysteine 384, cysteine 344–cysteine 368, and cysteine 346–cysteine 351. Histidine 329 is a binding site for Zn(2+). Glutamate 330 is an active-site residue. Zn(2+) contacts are provided by histidine 333 and histidine 339. Asparagine 367 carries an N-linked (GlcNAc...) asparagine glycan. The Ca(2+) site is built by cysteine 384 and asparagine 387.

It belongs to the venom metalloproteinase (M12B) family. P-I subfamily. In terms of assembly, monomer. Requires Zn(2+) as cofactor. In terms of processing, contains sialic acid terminally alpha(2-6)-linked to galactose in a complex N-glycan chain. Expressed by the venom gland.

It localises to the secreted. This zinc hemorrhagic metalloproteinase has fibrino(geno)lytic activities. It causes hemorrhage and has myonecrotic activity on both fiber types I and II. The recombinant enzyme, without post-translational modifications, also has proteolytic activity, but does not show any hemorrhagic activity. The chain is Snake venom metalloproteinase ACLH from Agkistrodon contortrix laticinctus (Broad-banded copperhead).